The following is a 57-amino-acid chain: Large ribosomal subunit protein bL32c (57 aa).

Component of the chloroplast large ribosomal subunit (LSU). Mature 70S chloroplast ribosomes of higher plants consist of a small (30S) and a large (50S) subunit. The 30S small subunit contains 1 molecule of ribosomal RNA (16S rRNA) and 24 different proteins. The 50S large subunit contains 3 rRNA molecules (23S, 5S and 4.5S rRNA) and 33 different proteins.

It localises to the plastid. The protein localises to the chloroplast. Its function is as follows. Component of the chloroplast ribosome (chloro-ribosome), a dedicated translation machinery responsible for the synthesis of chloroplast genome-encoded proteins, including proteins of the transcription and translation machinery and components of the photosynthetic apparatus. The protein is Large ribosomal subunit protein bL32c (rpl32) of Spinacia oleracea (Spinach).